Reading from the N-terminus, the 260-residue chain is HTH-type transcriptional repressor NanR (260 aa).

In terms of domain architecture, HTH gntR-type spans 27 to 95; the sequence is KKLSEMVEEE…NGERARISRP (69 aa). A DNA-binding region (H-T-H motif) is located at residues 55–74; it reads ERELMAFFNVGRPSVREALA.

Belongs to the NanR family.

Functionally, transcriptional repressor that controls expression of the genes required for the catabolism of sialic acids. The sequence is that of HTH-type transcriptional repressor NanR from Edwardsiella tarda (strain FL6-60).